The following is an 878-amino-acid chain: Alanine--tRNA ligase (878 aa).

4 residues coordinate Zn(2+): His-567, His-571, Cys-669, and His-673.

This sequence belongs to the class-II aminoacyl-tRNA synthetase family. Zn(2+) is required as a cofactor.

Its subcellular location is the cytoplasm. It catalyses the reaction tRNA(Ala) + L-alanine + ATP = L-alanyl-tRNA(Ala) + AMP + diphosphate. In terms of biological role, catalyzes the attachment of alanine to tRNA(Ala) in a two-step reaction: alanine is first activated by ATP to form Ala-AMP and then transferred to the acceptor end of tRNA(Ala). Also edits incorrectly charged Ser-tRNA(Ala) and Gly-tRNA(Ala) via its editing domain. The chain is Alanine--tRNA ligase from Rickettsia felis (strain ATCC VR-1525 / URRWXCal2) (Rickettsia azadi).